A 483-amino-acid polypeptide reads, in one-letter code: (R)-mandelonitrile beta-glucosyltransferase (483 aa).

The Proton acceptor role is filled by His-22. Position 22 (His-22) interacts with an anthocyanidin. Asp-124 functions as the Charge relay in the catalytic mechanism. Thr-146, Gln-363, His-378, Trp-381, Asn-382, Ser-383, and Glu-386 together coordinate UDP-alpha-D-glucose. An an anthocyanidin-binding site is contributed by Ala-401. UDP-alpha-D-glucose-binding residues include Glu-402 and Gln-403.

The protein belongs to the UDP-glycosyltransferase family.

The catalysed reaction is (R)-mandelonitrile + UDP-alpha-D-glucose = (R)-prunasin + UDP + H(+). Its function is as follows. Involved in the biosynthesis of the cyanogenic glycoside (R)-prunasin, a precursor of (R)-amygdalin, which at high concentrations is associated with intense bitterness in kernels of almond. Stereo-selectively glucosylates (R)-mandelonitrile to produce (R)-prunasin. In Prunus dulcis (Almond), this protein is (R)-mandelonitrile beta-glucosyltransferase.